We begin with the raw amino-acid sequence, 321 residues long: Transaldolase (321 aa).

Lysine 132 functions as the Schiff-base intermediate with substrate in the catalytic mechanism.

This sequence belongs to the transaldolase family. Type 1 subfamily. Homodimer.

The protein resides in the cytoplasm. It catalyses the reaction D-sedoheptulose 7-phosphate + D-glyceraldehyde 3-phosphate = D-erythrose 4-phosphate + beta-D-fructose 6-phosphate. It participates in carbohydrate degradation; pentose phosphate pathway; D-glyceraldehyde 3-phosphate and beta-D-fructose 6-phosphate from D-ribose 5-phosphate and D-xylulose 5-phosphate (non-oxidative stage): step 2/3. Functionally, transaldolase is important for the balance of metabolites in the pentose-phosphate pathway. This chain is Transaldolase, found in Rhizobium leguminosarum bv. trifolii (strain WSM2304).